A 282-amino-acid polypeptide reads, in one-letter code: NH(3)-dependent NAD(+) synthetase (282 aa).

An ATP-binding site is contributed by 51-58 (GISGGVDS). A Mg(2+)-binding site is contributed by D57. A deamido-NAD(+)-binding site is contributed by R148. T168 contacts ATP. Mg(2+) is bound at residue E173. Positions 181 and 188 each coordinate deamido-NAD(+). ATP is bound by residues K197 and T219. 268–269 (HK) contributes to the deamido-NAD(+) binding site.

This sequence belongs to the NAD synthetase family. Homodimer.

The catalysed reaction is deamido-NAD(+) + NH4(+) + ATP = AMP + diphosphate + NAD(+) + H(+). It functions in the pathway cofactor biosynthesis; NAD(+) biosynthesis; NAD(+) from deamido-NAD(+) (ammonia route): step 1/1. Its function is as follows. Catalyzes the ATP-dependent amidation of deamido-NAD to form NAD. Uses ammonia as a nitrogen source. This is NH(3)-dependent NAD(+) synthetase from Burkholderia cenocepacia (strain ATCC BAA-245 / DSM 16553 / LMG 16656 / NCTC 13227 / J2315 / CF5610) (Burkholderia cepacia (strain J2315)).